A 111-amino-acid polypeptide reads, in one-letter code: uncharacterized protein (111 aa).

This is an uncharacterized protein from Methanocaldococcus jannaschii (strain ATCC 43067 / DSM 2661 / JAL-1 / JCM 10045 / NBRC 100440) (Methanococcus jannaschii).